The chain runs to 75 residues: Caerin-1.1 (75 aa).

The N-terminal stretch at Met-1–Cys-22 is a signal peptide. The propeptide occupies Glu-23–Arg-49. Residues Glu-24–Arg-49 form a disordered region. The segment covering Asp-30–Ser-45 has biased composition (acidic residues). Residue Leu-74 is modified to Leucine amide.

It belongs to the frog skin active peptide (FSAP) family. Caerin subfamily. In terms of processing, the major product is Caerin-1.1; in addition, different peptides are produced that are missing some amino acid residues at the N-terminus or C-terminus. Caerin-1.1.1 and Caerin-1.1.4 are inactive. Expressed by the skin parotoid and/or rostral glands.

It is found in the secreted. Functionally, antimicrobial peptide with antibacterial and antiviral activities. Adopts an alpha helical conformation which can disrupt bacterial membranes. Inhibits the formation of NO by neuronal nitric oxide synthase (nNOS) at micromolar concentrations. Acts by a non-competitive mechanism, probably by binding to calcium/calmodulin and as a consequence blocking calmodulin attachment to nNOS. Its function is as follows. Is inactive. The chain is Caerin-1.1 from Ranoidea caerulea (Green tree frog).